We begin with the raw amino-acid sequence, 215 residues long: Ras-related protein Rab-5A (215 aa).

Positions 29, 30, 32, 33, 34, 35, 46, 47, 52, and 78 each coordinate GTP. Residue Ser34 participates in Mg(2+) binding. 2 short sequence motifs (switch) span residues 44–56 (QFHE…IGAA) and 77–93 (AGQE…YRGA). Thr52 provides a ligand contact to Mg(2+). Phosphoserine; by LRRK2 is present on Ser84. The (Microbial infection) N-beta-linked (GlcNAc) arginine glycan is linked to Arg120. GTP is bound by residues Asn133, Lys134, Asp136, Ala164, and Lys165. The tract at residues 181–215 (LPKNEPQNPGANSARGRGVDLTEPTQPTRNQCCSN) is disordered. Polar residues predominate over residues 203 to 215 (EPTQPTRNQCCSN). S-geranylgeranyl cysteine attachment occurs at residues Cys212 and Cys213.

It belongs to the small GTPase superfamily. Rab family. In terms of assembly, interacts with SGSM1 and SGSM3. Interacts with PIK3CB. Interacts with GDI1; this promotes dissociation from membranes; phosphorylation at Ser-84 disrupts this interaction. Interacts with GDI2; phosphorylation at Ser-84 disrupts the interaction. Interacts with EEA1. Interacts with RIN1 and GAPVD1, which regulate its pathway, probably by acting as a GEF. Interacts with RINL. Interacts with ALS2CL, SUN2, ZFYVE20 and RUFY1. Interacts with RABEP1; one RABEP1 homodimer binds two RAB5A chains, but at opposite sides of the dimer. Interacts with OCRL. Interacts with INPP5F. May be a component of a complex composed of RAB5A, DYN2 and PIK3C3. Does not interact with BLOC-3 complex (heterodimer of HPS1 and HPS4). Interacts with CLN5. Interacts with APPL2. Interacts with F8A1/F8A2/F8A3. Found in a complex with F8A1/F8A2/F8A3, HTT and RAB5A; mediates the recruitment of HTT by RAB5A onto early endosomes. Interacts with ATP9A. Interacts with PPP1R21; mediates the recruitment of FERRY complex by RAB5A onto early endosomes. The cofactor is Mg(2+). Post-translationally, phosphorylation of Ser-84 in the switch II region by LRRK2 prevents the association of RAB regulatory proteins, including RAB GDP dissociation inhibitors GDI1 and GDI2. (Microbial infection) Glycosylated on arginine residues by S.typhimurium protein Ssek3.

Its subcellular location is the cell membrane. The protein resides in the early endosome membrane. The protein localises to the melanosome. It is found in the cytoplasmic vesicle. It localises to the cell projection. Its subcellular location is the ruffle. The protein resides in the membrane. The protein localises to the cytoplasm. It is found in the cytosol. It localises to the phagosome membrane. Its subcellular location is the endosome membrane. The catalysed reaction is GTP + H2O = GDP + phosphate + H(+). Its activity is regulated as follows. Regulated by guanine nucleotide exchange factors (GEFs) including RINL, which promote the exchange of bound GDP for free GTP. Regulated by GTPase activating proteins (GAPs) which increase the GTP hydrolysis activity. Inhibited by GDP dissociation inhibitors (GDIs). Its function is as follows. The small GTPases Rab are key regulators of intracellular membrane trafficking, from the formation of transport vesicles to their fusion with membranes. Rabs cycle between an inactive GDP-bound form and an active GTP-bound form that is able to recruit to membranes different sets of downstream effectors directly responsible for vesicle formation, movement, tethering and fusion. RAB5A is required for the fusion of plasma membranes and early endosomes. Contributes to the regulation of filopodia extension. Required for the exosomal release of SDCBP, CD63, PDCD6IP and syndecan. Regulates maturation of apoptotic cell-containing phagosomes, probably downstream of DYN2 and PIK3C3. In Homo sapiens (Human), this protein is Ras-related protein Rab-5A.